Here is a 144-residue protein sequence, read N- to C-terminus: Deoxyuridine 5'-triphosphate nucleotidohydrolase (144 aa).

Residues 63–65 (RSG), Asn76, and 80–82 (TID) contribute to the substrate site.

It belongs to the dUTPase family. Mg(2+) serves as cofactor.

The catalysed reaction is dUTP + H2O = dUMP + diphosphate + H(+). The protein operates within pyrimidine metabolism; dUMP biosynthesis; dUMP from dCTP (dUTP route): step 2/2. Functionally, this enzyme is involved in nucleotide metabolism: it produces dUMP, the immediate precursor of thymidine nucleotides and it decreases the intracellular concentration of dUTP so that uracil cannot be incorporated into DNA. The chain is Deoxyuridine 5'-triphosphate nucleotidohydrolase from Bacteroides thetaiotaomicron (strain ATCC 29148 / DSM 2079 / JCM 5827 / CCUG 10774 / NCTC 10582 / VPI-5482 / E50).